Consider the following 572-residue polypeptide: MNLKALPAIEGDHNLKNYEETYRHFDWAEAEKHFSWHETGKLNAAYEAIDRHAESFRKNKVALYYKDAKRDEKYTFKEMKEESNRAGNVLRRYGNVEKGDRVFIFMPRSPELYFIMLGAIKIGAIAGPLFEAFMEGAVKDRLENSEAKVVVTTPELLERIPVDKLPHLQHVFVVGGEAESGTNIINYDEAAKQESTRLDIEWMDKKDGFLLHYTSGSTGTPKGVLHVHEAMIQQYQTGKWVLDLKEEDIYWCTADPGWVTGTVYGIFAPWLNGATNVIVGGRFSPESWYGTIEQLGVNVWYSAPTAFRMLMGAGDEMAAKYDLTSLRHVLSVGEPLNPEVIRWGHKVFNKRIHDTWWMTETGSQLICNYPCMDIKPGSMGKPIPGVEAAIVDNQGNELPPYRMGNLAIKKGWPSMMHTIWNNPEKYESYFMPGGWYVSGDSAYMDEEGYFWFQGRVDDVIMTSGERVGPFEVESKLVEHPAIAEAGVIGKPDPVRGEIIKAFIALREGFEPSDKLKEEIRLFVKQGLAAHAAPREIEFKDKLPKTRSGKIMRRVLKAWELNLPAGDLSTMED.

CoA is bound at residue Thr-260. Residues 333 to 335 (GEP), 354 to 359 (DTWWMT), Asp-440, and Arg-455 each bind ATP. Ser-463 serves as a coordination point for CoA. Residue Arg-466 participates in ATP binding. Residues Val-477, His-479, and Ile-482 each contribute to the Mg(2+) site. Lys-524 contacts CoA. At Lys-549 the chain carries N6-acetyllysine.

It belongs to the ATP-dependent AMP-binding enzyme family. As to quaternary structure, interacts with FloT. It depends on Mg(2+) as a cofactor. Post-translationally, acetylated. Deacetylation by the SIR2-homolog deacetylase activates the enzyme.

Its subcellular location is the cell membrane. It is found in the membrane raft. The enzyme catalyses acetate + ATP + CoA = acetyl-CoA + AMP + diphosphate. Its function is as follows. Catalyzes the conversion of acetate into acetyl-CoA (AcCoA), an essential intermediate at the junction of anabolic and catabolic pathways. AcsA undergoes a two-step reaction. In the first half reaction, AcsA combines acetate with ATP to form acetyl-adenylate (AcAMP) intermediate. In the second half reaction, it can then transfer the acetyl group from AcAMP to the sulfhydryl group of CoA, forming the product AcCoA. Has a role in growth and sporulation on acetate. In Bacillus subtilis (strain 168), this protein is Acetyl-coenzyme A synthetase (acsA).